Here is a 205-residue protein sequence, read N- to C-terminus: Homeobox protein goosecoid-2 (205 aa).

Disordered stretches follow at residues 33-58 (SLPA…EPGA) and 185-205 (KRAS…KGSC). The homeobox DNA-binding region spans 126-185 (TRRHRTIFSEEQLQALEALFVQNQYPDVSTRERLAGRIRLREERVEVWFKNRRAKWRHQK).

Belongs to the paired homeobox family. Bicoid subfamily. In terms of tissue distribution, detected in adult testis and pituitary, and in 9-10 week fetal tissue (thorax). Probably expressed in other tissues at low levels.

The protein localises to the nucleus. In terms of biological role, may have a role in development. May regulate its own transcription. May bind the bicoid consensus sequence TAATCC. This Homo sapiens (Human) protein is Homeobox protein goosecoid-2 (GSC2).